A 483-amino-acid polypeptide reads, in one-letter code: Glutamyl-tRNA(Gln) amidotransferase subunit A (483 aa).

Active-site charge relay system residues include Lys-76 and Ser-151. Ser-175 serves as the catalytic Acyl-ester intermediate.

This sequence belongs to the amidase family. GatA subfamily. As to quaternary structure, heterotrimer of A, B and C subunits.

The catalysed reaction is L-glutamyl-tRNA(Gln) + L-glutamine + ATP + H2O = L-glutaminyl-tRNA(Gln) + L-glutamate + ADP + phosphate + H(+). Functionally, allows the formation of correctly charged Gln-tRNA(Gln) through the transamidation of misacylated Glu-tRNA(Gln) in organisms which lack glutaminyl-tRNA synthetase. The reaction takes place in the presence of glutamine and ATP through an activated gamma-phospho-Glu-tRNA(Gln). The chain is Glutamyl-tRNA(Gln) amidotransferase subunit A from Pseudomonas putida (strain W619).